The following is a 159-amino-acid chain: 6,7-dimethyl-8-ribityllumazine synthase (159 aa).

Residues W30, 64–66 (TFE), and 88–90 (CVI) each bind 5-amino-6-(D-ribitylamino)uracil. 93-94 (ET) lines the (2S)-2-hydroxy-3-oxobutyl phosphate pocket. The active-site Proton donor is the H96. F121 contacts 5-amino-6-(D-ribitylamino)uracil. R135 serves as a coordination point for (2S)-2-hydroxy-3-oxobutyl phosphate.

It belongs to the DMRL synthase family.

The enzyme catalyses (2S)-2-hydroxy-3-oxobutyl phosphate + 5-amino-6-(D-ribitylamino)uracil = 6,7-dimethyl-8-(1-D-ribityl)lumazine + phosphate + 2 H2O + H(+). It participates in cofactor biosynthesis; riboflavin biosynthesis; riboflavin from 2-hydroxy-3-oxobutyl phosphate and 5-amino-6-(D-ribitylamino)uracil: step 1/2. Functionally, catalyzes the formation of 6,7-dimethyl-8-ribityllumazine by condensation of 5-amino-6-(D-ribitylamino)uracil with 3,4-dihydroxy-2-butanone 4-phosphate. This is the penultimate step in the biosynthesis of riboflavin. This Cytophaga hutchinsonii (strain ATCC 33406 / DSM 1761 / CIP 103989 / NBRC 15051 / NCIMB 9469 / D465) protein is 6,7-dimethyl-8-ribityllumazine synthase.